Consider the following 224-residue polypeptide: Pyridoxal 5'-phosphate synthase subunit SNO1 (224 aa).

L-glutamine is bound at residue 67-69 (GES). The active-site Nucleophile is the cysteine 100. Residues arginine 129 and 160–161 (IR) contribute to the L-glutamine site. Catalysis depends on charge relay system residues histidine 203 and glutamate 205.

The protein belongs to the glutaminase PdxT/SNO family.

The catalysed reaction is aldehydo-D-ribose 5-phosphate + D-glyceraldehyde 3-phosphate + L-glutamine = pyridoxal 5'-phosphate + L-glutamate + phosphate + 3 H2O + H(+). The enzyme catalyses L-glutamine + H2O = L-glutamate + NH4(+). Its pathway is cofactor biosynthesis; pyridoxal 5'-phosphate biosynthesis. Catalyzes the hydrolysis of glutamine to glutamate and ammonia as part of the biosynthesis of pyridoxal 5'-phosphate. The resulting ammonia molecule is channeled to the active site of a SNZ isoform. This is Pyridoxal 5'-phosphate synthase subunit SNO1 (SNO1) from Saccharomyces cerevisiae (strain ATCC 204508 / S288c) (Baker's yeast).